The chain runs to 531 residues: Muscarinic acetylcholine receptor M5 (531 aa).

Residues M1–E28 are Extracellular-facing. The N-linked (GlcNAc...) asparagine glycan is linked to N7. A helical membrane pass occupies residues V29–I52. Residues S53–N65 are Cytoplasmic-facing. Residues Y66–Y86 form a helical membrane-spanning segment. At T87–D103 the chain is on the extracellular side. The cysteines at positions 102 and 182 are disulfide-linked. The chain crosses the membrane as a helical span at residues L104–F125. Topologically, residues D126–R145 are cytoplasmic. Residues A146–W168 form a helical membrane-spanning segment. Residues Q169–P190 lie on the Extracellular side of the membrane. Residues T191–C213 form a helical membrane-spanning segment. The Cytoplasmic segment spans residues R214 to T442. Disordered stretches follow at residues S259–K295 and E327–V346. The segment covering Q267–T287 has biased composition (low complexity). Over residues K334–V346 the composition is skewed to polar residues. Residues L443–V463 traverse the membrane as a helical segment. The Extracellular segment spans residues S464 to H477. A helical membrane pass occupies residues L478–C497. Topologically, residues N498–P531 are cytoplasmic. Residues T500 and T504 each carry the phosphothreonine modification.

It belongs to the G-protein coupled receptor 1 family. Muscarinic acetylcholine receptor subfamily. CHRM5 sub-subfamily.

Its subcellular location is the cell membrane. The protein resides in the postsynaptic cell membrane. Functionally, the muscarinic acetylcholine receptor mediates various cellular responses, including inhibition of adenylate cyclase, breakdown of phosphoinositides and modulation of potassium channels through the action of G proteins. Primary transducing effect is Pi turnover. The polypeptide is Muscarinic acetylcholine receptor M5 (Chrm5) (Rattus norvegicus (Rat)).